The primary structure comprises 321 residues: NADPH-dependent codeinone reductase 1-4 (321 aa).

NADPH contacts are provided by threonine 27 and aspartate 51. Active-site proton donor residues include tyrosine 56 and histidine 119. Substrate is bound at residue histidine 119. NADPH contacts are provided by serine 165, glutamine 187, serine 214, leucine 216, serine 264, and arginine 269. The segment at 299-321 is disordered; sequence SADFLLSPTGPFKTEEEFWDEKD.

This sequence belongs to the aldo/keto reductase family. As to expression, latex secreting cells (laticifer cells). Expressed constitutively in all organs with highest levels in capsules. Restricted to the parietal region of sieve elements adjacent or proximal to laticifers in roots, stems, leaves and carpels.

It is found in the cytoplasm. It localises to the cytosol. It catalyses the reaction codeine + NADP(+) = codeinone + NADPH + H(+). It carries out the reaction neopine + NADP(+) = neopinone + NADPH + H(+). The enzyme catalyses morphine + NADP(+) = morphinone + NADPH + H(+). The catalysed reaction is neomorphine + NADP(+) = neomorphinone + NADPH + H(+). Its pathway is alkaloid biosynthesis; morphine biosynthesis. Its function is as follows. NADPH-dependent codeinone reductase involved in biosynthesis of morphinan-type benzylisoquinoline and opiate alkaloids natural products. Reduces codeinone to codeine in the penultimate step in morphine biosynthesis. Can use morphinone, hydrocodone and hydromorphone as substrate during reductive reaction with NADPH as cofactor, and morphine and dihydrocodeine as substrate during oxidative reaction with NADP as cofactor. Converts morphinone to morphine, and neomorphinone to neomorphine. Reduces irreversibly neopinone, a spontaneous isomer of codeinone, to neopine; in planta, neopine levels are limited to low levels. The sequence is that of NADPH-dependent codeinone reductase 1-4 from Papaver somniferum (Opium poppy).